The sequence spans 364 residues: MGAYILRRLALMIPTIVGIMGISFLVIQFAPGGPVEQVVAQLTGQGDSASDRLSGGGDLMGQSGGFDESGSKYRGAQGLDPELIKKLEKQFGFDKPPLTRFLEMMWNYIRFDFGDSFFRNSSVIDLIIDKLPVSASLGFWILIISYVISIPLGIKKAVSDGSTFDVWTSGIIIIGYAVPSFLFGILLIVLFAGGSFFDWFPLRGLVSDNFDQLNWWQKIIDYFWHLTLPLIALSLSAFATTTLLTKNSFIDEIKKQYVVTARAKGLSERKVLYGHVFRNAMLIVIAGFPGAFISAFFTGSLLIENIFSLDGLGRLGYLSVVNRDYPIVFGTLFIFSLMGLVVGLLSDLIYTWIDPRIDFERRDV.

The next 6 helical transmembrane spans lie at 9–29, 134–154, 171–191, 219–239, 283–303, and 325–345; these read LALMIPTIVGIMGISFLVIQF, SASLGFWILIISYVISIPLGI, IIIIGYAVPSFLFGILLIVLF, IIDYFWHLTLPLIALSLSAFA, IVIAGFPGAFISAFFTGSLLI, and YPIVFGTLFIFSLMGLVVGLL. The region spanning 131–350 is the ABC transmembrane type-1 domain; it reads LPVSASLGFW…VVGLLSDLIY (220 aa).

The protein belongs to the binding-protein-dependent transport system permease family. The complex is composed of one ATP-binding protein (YejF), two transmembrane proteins (YejB and YejE) and a solute-binding protein (YepA or YejA).

Its subcellular location is the cell inner membrane. Its function is as follows. Part of the ABC transporter complex YejBEF-YepA involved in the uptake of muropeptides, the breakdown products of cell wall peptidoglycan. The import of muropeptides into the cell enables peptidoglycan recycling, which is vital for cell wall integrity in this bacterium. Is also probably part of the ABC transporter complex YejABEF, which is likely involved in broad-spectrum peptide import. Responsible for the translocation of the substrate across the membrane. The polypeptide is Peptidoglycan transport system permease protein YejB (Agrobacterium fabrum (strain C58 / ATCC 33970) (Agrobacterium tumefaciens (strain C58))).